Consider the following 524-residue polypeptide: Pentatricopeptide repeat-containing protein At1g02150 (524 aa).

7 PPR repeats span residues 168–202 (DRRVYGSLLNAYVRAKSREKAEALLNTMRDKGYAL), 203–237 (HPLPFNVMMTLYMNLREYDKVDAMVFEMKQKDIRL), 238–268 (DIYSYNIWLSSCGSLGSVEKMELVYQQMKSD), 274–304 (NWTTFSTMATMYIKMGETEKAEDALRKVEAR), 309–339 (NRIPYHYLLSLYGSLGNKKELYRVWHVYKSV), 344–378 (PNLGYHALVSSLVRMGDIEGAEKVYEEWLPVKSSY), and 379–413 (DPRIPNLLMNAYVKNDQLETAEGLFDHMVEMGGKP).

Belongs to the PPR family. P subfamily.

This is Pentatricopeptide repeat-containing protein At1g02150 from Arabidopsis thaliana (Mouse-ear cress).